A 326-amino-acid polypeptide reads, in one-letter code: Deoxyuridine 5'-triphosphate nucleotidohydrolase (326 aa).

Substrate-binding positions include 218–220 and 321–322; these read RSS and FG.

Belongs to the dUTPase family. It depends on Mg(2+) as a cofactor.

The enzyme catalyses dUTP + H2O = dUMP + diphosphate + H(+). Functionally, involved in nucleotide metabolism: produces dUMP, the immediate precursor of thymidine nucleotides and decreases the intracellular concentration of dUTP to avoid uracil incorporation into viral DNA. The protein is Deoxyuridine 5'-triphosphate nucleotidohydrolase of Equus caballus (Horse).